The following is an 812-amino-acid chain: Probable inorganic carbon transporter subunit DabA (812 aa).

Zn(2+)-binding residues include C337, D339, H499, and C514.

The protein belongs to the inorganic carbon transporter (TC 9.A.2) DabA family. As to quaternary structure, forms a complex with DabB. Requires Zn(2+) as cofactor.

The protein localises to the cell inner membrane. Part of an energy-coupled inorganic carbon pump. This Xanthomonas oryzae pv. oryzae (strain KACC10331 / KXO85) protein is Probable inorganic carbon transporter subunit DabA.